The following is a 447-amino-acid chain: Tubulin alpha-2 chain (447 aa).

The GTP site is built by Gln-11, Glu-71, Gly-144, Thr-145, Thr-179, Asn-206, and Asn-228. Glu-71 contacts Mg(2+). The active site involves Glu-254.

It belongs to the tubulin family. In terms of assembly, dimer of alpha and beta chains. A typical microtubule is a hollow water-filled tube with an outer diameter of 25 nm and an inner diameter of 15 nM. Alpha-beta heterodimers associate head-to-tail to form protofilaments running lengthwise along the microtubule wall with the beta-tubulin subunit facing the microtubule plus end conferring a structural polarity. Microtubules usually have 13 protofilaments but different protofilament numbers can be found in some organisms and specialized cells. The cofactor is Mg(2+). Post-translationally, undergoes a tyrosination/detyrosination cycle, the cyclic removal and re-addition of a C-terminal tyrosine residue by the enzymes tubulin tyrosine carboxypeptidase (TTCP) and tubulin tyrosine ligase (TTL), respectively.

It localises to the cytoplasm. Its subcellular location is the cytoskeleton. It carries out the reaction GTP + H2O = GDP + phosphate + H(+). Functionally, tubulin is the major constituent of microtubules, a cylinder consisting of laterally associated linear protofilaments composed of alpha- and beta-tubulin heterodimers. Microtubules grow by the addition of GTP-tubulin dimers to the microtubule end, where a stabilizing cap forms. Below the cap, tubulin dimers are in GDP-bound state, owing to GTPase activity of alpha-tubulin. This Eleusine indica (Goosegrass) protein is Tubulin alpha-2 chain (TUBA2).